The following is a 344-amino-acid chain: Putative voltage-gated potassium channel subunit beta (344 aa).

Residues Trp-33, Asp-62, Tyr-67, Ser-167, Gln-193, Trp-222, Ser-223, Pro-224, Leu-225, Lys-233, Arg-243, Gly-301, Ser-303, Gln-307, Glu-310, and Asn-311 each coordinate NADP(+). Residue Tyr-67 is the Proton donor/acceptor of the active site.

The protein belongs to the shaker potassium channel beta subunit family. In terms of assembly, forms heteromultimeric complexes with potassium channel alpha subunits.

It is found in the cytoplasm. The protein localises to the nucleus. In terms of biological role, probable accessory potassium channel protein which modulates the activity of the pore-forming alpha subunit. The polypeptide is Putative voltage-gated potassium channel subunit beta (Schizosaccharomyces pombe (strain 972 / ATCC 24843) (Fission yeast)).